The sequence spans 160 residues: Endoribonuclease YbeY (160 aa).

Positions 124, 128, and 134 each coordinate Zn(2+).

This sequence belongs to the endoribonuclease YbeY family. Zn(2+) is required as a cofactor.

It localises to the cytoplasm. Single strand-specific metallo-endoribonuclease involved in late-stage 70S ribosome quality control and in maturation of the 3' terminus of the 16S rRNA. This is Endoribonuclease YbeY from Jannaschia sp. (strain CCS1).